The primary structure comprises 280 residues: Dolichyl-diphosphooligosaccharide--protein glycosyltransferase subunit 2 (280 aa).

A signal peptide spans 1 to 16 (MKLLLVLLTIASVALA). Residues 17–187 (AVDDVAVNNF…FRQPEKRPSA (171 aa)) lie on the Lumenal side of the membrane. The chain crosses the membrane as a helical span at residues 188–208 (LISDLFTIICLSPLLILVVLW). The Cytoplasmic portion of the chain corresponds to 209 to 222 (SQVGINFQNAPASP). The helical transmembrane segment at 223–243 (WVPIFHVGLIGIFGIYFMFWV) threads the bilayer. Residue Q244 is a topological domain, lumenal. A helical transmembrane segment spans residues 245–265 (FDMFVTLKYLAVLGFLTFVAG). Residues 266-280 (NRVLRAISESKQKSE) lie on the Cytoplasmic side of the membrane.

This sequence belongs to the SWP1 family. As to quaternary structure, component of the oligosaccharyltransferase (OST) complex.

The protein resides in the endoplasmic reticulum membrane. The protein operates within protein modification; protein glycosylation. Functionally, subunit of the oligosaccharyl transferase (OST) complex that catalyzes the initial transfer of a defined glycan (Glc(3)Man(9)GlcNAc(2) in eukaryotes) from the lipid carrier dolichol-pyrophosphate to an asparagine residue within an Asn-X-Ser/Thr consensus motif in nascent polypeptide chains, the first step in protein N-glycosylation. N-glycosylation occurs cotranslationally and the complex associates with the Sec61 complex at the channel-forming translocon complex that mediates protein translocation across the endoplasmic reticulum (ER). All subunits are required for a maximal enzyme activity. The chain is Dolichyl-diphosphooligosaccharide--protein glycosyltransferase subunit 2 from Caenorhabditis elegans.